Reading from the N-terminus, the 323-residue chain is Leucine-rich repeat-containing protein 46 (323 aa).

4 LRR repeats span residues 49 to 70, 71 to 92, 93 to 114, and 115 to 135; these read ELET…EKLR, NIHS…ACIT, SLRF…LDLQ, and YLQF…DELP. One can recognise an LRRCT domain in the interval 146 to 188; that stretch reads NPCTNQEGYRKMVIGALPLLLDLDKQPILERWTSDEEDKSSDD. Thr-178 is subject to Phosphothreonine. Phosphoserine occurs at positions 179, 185, and 186. Residues 203-228 are a coiled coil; it reads RGFFKDLEQELHQHQERRQQAALTEH. The tract at residues 249–323 is disordered; that stretch reads MAGDCSSTAT…TKMTNKKSTK (75 aa). A compositionally biased stretch (low complexity) spans 267–316; it reads PKATSSTQTASTTKKQVSKNQKSSVQARKGALAATTSKTSQAATPSMTKM. Ser-303 is subject to Phosphoserine.

As to expression, testis-specific (at protein level).

The protein localises to the cell projection. The protein resides in the cilium. It localises to the flagellum. Required for normal spermatogenesis and male fertility. Plays an important role in sperm flagellum biogenesis. This Mus musculus (Mouse) protein is Leucine-rich repeat-containing protein 46 (Lrrc46).